Reading from the N-terminus, the 161-residue chain is Shikimate kinase (161 aa).

Position 10–15 (10–15 (GAGKTT)) interacts with ATP. Residue T14 coordinates Mg(2+). Substrate is bound by residues D28, R52, and G74. R114 contacts ATP. Substrate is bound at residue R132.

This sequence belongs to the shikimate kinase family. As to quaternary structure, monomer. Requires Mg(2+) as cofactor.

It is found in the cytoplasm. It carries out the reaction shikimate + ATP = 3-phosphoshikimate + ADP + H(+). Its pathway is metabolic intermediate biosynthesis; chorismate biosynthesis; chorismate from D-erythrose 4-phosphate and phosphoenolpyruvate: step 5/7. Its function is as follows. Catalyzes the specific phosphorylation of the 3-hydroxyl group of shikimic acid using ATP as a cosubstrate. The sequence is that of Shikimate kinase from Streptococcus gordonii (strain Challis / ATCC 35105 / BCRC 15272 / CH1 / DL1 / V288).